Here is a 91-residue protein sequence, read N- to C-terminus: Elongation factor 1-beta (91 aa).

The protein belongs to the EF-1-beta/EF-1-delta family.

Functionally, promotes the exchange of GDP for GTP in EF-1-alpha/GDP, thus allowing the regeneration of EF-1-alpha/GTP that could then be used to form the ternary complex EF-1-alpha/GTP/AAtRNA. This is Elongation factor 1-beta from Metallosphaera sedula (strain ATCC 51363 / DSM 5348 / JCM 9185 / NBRC 15509 / TH2).